The primary structure comprises 78 residues: Bowman-Birk type proteinase inhibitors I-A, I-B, and I-A' (78 aa).

7 cysteine pairs are disulfide-bonded: Cys-18–Cys-72, Cys-19–Cys-34, Cys-22–Cys-68, Cys-24–Cys-32, Cys-42–Cys-49, Cys-46–Cys-61, and Cys-51–Cys-59.

It belongs to the Bowman-Birk serine protease inhibitor family.

Its function is as follows. These inhibitors strongly inhibit trypsin. The sequence is that of Bowman-Birk type proteinase inhibitors I-A, I-B, and I-A' from Phaseolus angularis (Azuki bean).